Consider the following 615-residue polypeptide: MYTYTTIREIVDKLNLEILNEGNLDLKIDIPNIYQIGYELVGFLDKESDELNKYINICSLKESRFIATFSKERKEKVISEYMSLDFPALIFTKDAIITEEFYYYAKRYNKNILLSNEKASVTVRKIKFFLSKALSIEEEYENYSLMEIHGVGVLMSGYSNARKGVMIELIERGHRMVTDKNLIIRRVGENDLVGYNAKKREKLGHFYLEDIKGGYVDVTDHFGVKSTRIEKKINILIVLEEWNEKEFYDRLGLDVQYEDFVGEKIQKYIIPVRKGRNLAVIIETAALTFRLRRMGHNTPLEFLTKSQEIIERKKKEREEYMNTNRLPVTKLINEFDLEIKYGEDKVSSTYINSSNVYRPSLSLIGFFDLIEEVKNIGIQIFSKIEFKFLENLPPIERVNNLKKFLTYDIPMIVLTVDANPPDYFFDLVSKSGHILAIAPYKKASQIVANFNNYLDSFFSETTSVHGVLVELFGFGVLLTGKSGIGKSETALELIHRGHRLIADDMVKFYRNTQGDVVGKSAELPFFMEIRGLGIIDIKTLYGLSAVRLSKTLDMIIELQAVDNSDYMSAPSAHLYEDVLGKPIKKRILEISSGRNAAAMVEVMVMDHMSGLLGEK.

480-487 is a binding site for ATP; sequence GKSGIGKS.

This sequence belongs to the HPrK/P family.

The catalysed reaction is [HPr protein]-L-serine + ATP = [HPr protein]-O-phospho-L-serine + ADP + H(+). It carries out the reaction [HPr protein]-O-phospho-L-serine + phosphate + H(+) = [HPr protein]-L-serine + diphosphate. In terms of biological role, catalyzes the ATP- as well as the pyrophosphate-dependent phosphorylation of a specific serine residue in HPr, a phosphocarrier protein of the phosphoenolpyruvate-dependent sugar phosphotransferase system (PTS). HprK/P also catalyzes the pyrophosphate-producing, inorganic phosphate-dependent dephosphorylation (phosphorolysis) of seryl-phosphorylated HPr (P-Ser-HPr). The polypeptide is Putative HPr kinase/phosphorylase (hprK) (Fusobacterium nucleatum subsp. nucleatum (strain ATCC 25586 / DSM 15643 / BCRC 10681 / CIP 101130 / JCM 8532 / KCTC 2640 / LMG 13131 / VPI 4355)).